A 237-amino-acid polypeptide reads, in one-letter code: Cell division cycle-associated protein 4 (237 aa).

One can recognise an SERTA domain in the interval 26 to 73 (YSLQRQSLLDMSLVKLQLCHMLVEPNLCRSVLIANTVRQIQEEMSQDG).

In terms of tissue distribution, expressed preferentially in hematopoietic progenitors and mature blood cells. Expressed at low levels in the heart, lung, spleen, and thymus and at a higher level in muscle.

It localises to the nucleus. Functionally, may participate in the regulation of cell proliferation through the E2F/RB pathway. May be involved in molecular regulation of hematopoietic stem cells and progenitor cell lineage commitment and differentiation. In Mus musculus (Mouse), this protein is Cell division cycle-associated protein 4 (Cdca4).